A 249-amino-acid polypeptide reads, in one-letter code: Probable calcium-binding protein CML12 (249 aa).

The span at 1-24 (MQSQRERPREDRVHEETRGADHAH) shows a compositional bias: basic and acidic residues. The tract at residues 1–80 (MQSQRERPRE…RKGKAPATAE (80 aa)) is disordered. Low complexity predominate over residues 30 to 56 (AAAAASATATETATRTMSLHAGGVVVV). Positions 57–70 (DGKEKGKKEEGEGK) are enriched in basic and acidic residues. EF-hand domains follow at residues 91–126 (EQLR…LGLR), 128–163 (AAGD…LILG), 171–206 (VDQA…MGHP), and 207–242 (ICYA…SALD). Ca(2+) is bound by residues aspartate 104, aspartate 106, aspartate 108, serine 110, glutamate 115, aspartate 141, aspartate 143, asparagine 145, threonine 147, glutamate 152, aspartate 184, aspartate 186, asparagine 188, glutamate 195, aspartate 220, aspartate 222, aspartate 224, and glutamate 231.

Potential calcium sensor. This chain is Probable calcium-binding protein CML12 (CML12), found in Oryza sativa subsp. japonica (Rice).